Reading from the N-terminus, the 172-residue chain is MAHFNECAHLIEGVDKANRAYAENIMHNIDPLQVMLDMQRHLQIRLANDKPETNRHPDSLETAGEVLAWLRNQDDYIADETRELYTSLGGMSNGEKEASAVWKPWKKRYSEMQSKKIQDLSPEDQLEIKFELIDQFHFFMNKFIALGMSAEEIFKLYYLKNAENFARQDRGY.

The catalysed reaction is dCTP + H2O = dCMP + diphosphate + H(+). The sequence is that of dCTP pyrophosphatase (56) from Enterobacteria phage LZ5 (Bacteriophage LZ5).